We begin with the raw amino-acid sequence, 556 residues long: Urocanate hydratase (556 aa).

NAD(+)-binding positions include 52–53 (GG), Gln-130, 176–178 (GMG), Glu-196, Arg-201, 242–243 (NA), 263–267 (QTSAH), 273–274 (YL), and Tyr-322. Cys-410 is an active-site residue. Gly-492 contributes to the NAD(+) binding site.

Belongs to the urocanase family. NAD(+) serves as cofactor.

The protein resides in the cytoplasm. It catalyses the reaction 4-imidazolone-5-propanoate = trans-urocanate + H2O. It participates in amino-acid degradation; L-histidine degradation into L-glutamate; N-formimidoyl-L-glutamate from L-histidine: step 2/3. Catalyzes the conversion of urocanate to 4-imidazolone-5-propionate. This Shewanella frigidimarina (strain NCIMB 400) protein is Urocanate hydratase.